The sequence spans 131 residues: SPbeta prophage-derived uncharacterized protein YoqY (131 aa).

This Bacillus subtilis (strain 168) protein is SPbeta prophage-derived uncharacterized protein YoqY (yoqY).